The sequence spans 77 residues: uncharacterized protein (77 aa).

This is an uncharacterized protein from Escherichia coli (strain K12).